A 319-amino-acid polypeptide reads, in one-letter code: Mitochondrial thiamine pyrophosphate carrier 1 (319 aa).

3 Solcar repeats span residues 12–110 (GQRY…VTQS), 121–207 (PQPA…VRVP), and 214–309 (PFGS…VLKI). 6 helical membrane passes run 17 to 35 (VVAA…VAPL), 91 to 107 (LLYI…YRTV), 127 to 147 (FVSG…FDLL), 182 to 201 (GVSA…FATY), 221 to 237 (TAGV…VFPL), and 284 to 301 (GLTV…VTMW).

It belongs to the mitochondrial carrier (TC 2.A.29) family.

It is found in the mitochondrion inner membrane. Functionally, mitochondrial transporter that mediates uptake of thiamine pyrophosphate (ThPP) into mitochondria. The sequence is that of Mitochondrial thiamine pyrophosphate carrier 1 (TPC1) from Coccidioides immitis (strain RS) (Valley fever fungus).